A 520-amino-acid chain; its full sequence is D-aminopeptidase (520 aa).

The active-site Nucleophile is serine 62. Catalysis depends on lysine 65, which acts as the Proton donor/acceptor. The tract at residues 477-487 (QRSMDAPSPGE) is important for specificity. A substrate-binding site is contributed by aspartate 481.

Belongs to the peptidase S12 family. As to quaternary structure, homodimer.

The catalysed reaction is Release of an N-terminal D-amino acid from a peptide, Xaa-|-Yaa-, in which Xaa is preferably D-Ala, D-Ser or D-Thr. D-amino acid amides and methyl esters also are hydrolyzed, as is glycine amide.. Inhibited by beta-lactam compounds such as 6-aminopenicillic acid, 7-aminocephalosporanic acid, benzylpenicillin and ampicillin. Inhibited by p-chloromercuribenzoate. In terms of biological role, hydrolyzes N-terminal residues in D-amino acid-containing peptides. This Brucella anthropi (strain ATCC 49188 / DSM 6882 / CCUG 24695 / JCM 21032 / LMG 3331 / NBRC 15819 / NCTC 12168 / Alc 37) (Ochrobactrum anthropi) protein is D-aminopeptidase.